Consider the following 351-residue polypeptide: Foldase protein PrsA 1 (351 aa).

A signal peptide spans 1-22; that stretch reads MKNSNKLIASVVTLASVMALAA. Cysteine 23 carries N-palmitoyl cysteine lipidation. Cysteine 23 is lipidated: S-diacylglycerol cysteine. A PpiC domain is found at 145–240; sequence TPTMAVEMIT…KKFYIVKVTK (96 aa). 2 stretches are compositionally biased toward low complexity: residues 303–317 and 326–351; these read KTKA…SESS and ESEQ…PAAQ. The segment at 303-351 is disordered; sequence KTKAASESSTTSESSKAAEENPSESEQTQTSSAEEPTETEAQTQEPAAQ.

Belongs to the PrsA family.

The protein resides in the cell membrane. It carries out the reaction [protein]-peptidylproline (omega=180) = [protein]-peptidylproline (omega=0). In terms of biological role, plays a major role in protein secretion by helping the post-translocational extracellular folding of several secreted proteins. The protein is Foldase protein PrsA 1 (prsA1) of Streptococcus pyogenes serotype M1.